Reading from the N-terminus, the 124-residue chain is Small ribosomal subunit protein uS12 (124 aa).

Position 89 is a 3-methylthioaspartic acid (Asp89).

It belongs to the universal ribosomal protein uS12 family. As to quaternary structure, part of the 30S ribosomal subunit. Contacts proteins S8 and S17. May interact with IF1 in the 30S initiation complex.

Its function is as follows. With S4 and S5 plays an important role in translational accuracy. Functionally, interacts with and stabilizes bases of the 16S rRNA that are involved in tRNA selection in the A site and with the mRNA backbone. Located at the interface of the 30S and 50S subunits, it traverses the body of the 30S subunit contacting proteins on the other side and probably holding the rRNA structure together. The combined cluster of proteins S8, S12 and S17 appears to hold together the shoulder and platform of the 30S subunit. The polypeptide is Small ribosomal subunit protein uS12 (Shewanella denitrificans (strain OS217 / ATCC BAA-1090 / DSM 15013)).